A 146-amino-acid polypeptide reads, in one-letter code: D-aminoacyl-tRNA deacylase (146 aa).

The short motif at 137-138 (GP) is the Gly-cisPro motif, important for rejection of L-amino acids element.

It belongs to the DTD family. Homodimer.

The protein localises to the cytoplasm. It carries out the reaction glycyl-tRNA(Ala) + H2O = tRNA(Ala) + glycine + H(+). The catalysed reaction is a D-aminoacyl-tRNA + H2O = a tRNA + a D-alpha-amino acid + H(+). Its function is as follows. An aminoacyl-tRNA editing enzyme that deacylates mischarged D-aminoacyl-tRNAs. Also deacylates mischarged glycyl-tRNA(Ala), protecting cells against glycine mischarging by AlaRS. Acts via tRNA-based rather than protein-based catalysis; rejects L-amino acids rather than detecting D-amino acids in the active site. By recycling D-aminoacyl-tRNA to D-amino acids and free tRNA molecules, this enzyme counteracts the toxicity associated with the formation of D-aminoacyl-tRNA entities in vivo and helps enforce protein L-homochirality. This is D-aminoacyl-tRNA deacylase from Bacillus cytotoxicus (strain DSM 22905 / CIP 110041 / 391-98 / NVH 391-98).